Reading from the N-terminus, the 164-residue chain is HTH-type transcriptional regulator PapX (164 aa).

Residues 25 to 159 enclose the HTH marR-type domain; the sequence is EHLLMQLCIR…FEVISKKLLA (135 aa).

It is found in the cytoplasm. The protein is HTH-type transcriptional regulator PapX (papX) of Escherichia coli.